The chain runs to 140 residues: Transcription antitermination protein NusB (140 aa).

It belongs to the NusB family.

Its function is as follows. Involved in transcription antitermination. Required for transcription of ribosomal RNA (rRNA) genes. Binds specifically to the boxA antiterminator sequence of the ribosomal RNA (rrn) operons. The chain is Transcription antitermination protein NusB from Pseudothermotoga lettingae (strain ATCC BAA-301 / DSM 14385 / NBRC 107922 / TMO) (Thermotoga lettingae).